The primary structure comprises 1512 residues: Bifunctional glutamate/proline--tRNA ligase (1512 aa).

The tract at residues 164–759 is glutamate--tRNA ligase; sequence GTKWDVSGNR…SSVLYSRVAV (596 aa). The 'HIGH' region signature appears at 204-214; it reads PEASGYLHIGH. The interval 294–315 is disordered; the sequence is TPAEQMKAEREQRTESKHRKNS. Over residues 299 to 308 the composition is skewed to basic and acidic residues; sequence MKAEREQRTE. K300 carries the post-translational modification N6-acetyllysine; alternate. K300 is subject to N6-malonyllysine; alternate. T355 bears the Phosphothreonine mark. K417 is subject to N6-acetyllysine. The 'KMSKS' region motif lies at 432-436; it reads VLSKR. S434 carries the post-translational modification Phosphoserine. N6-acetyllysine is present on residues K498, K535, K542, and K637. Residues 709–736 show a composition bias toward basic and acidic residues; the sequence is EMPTSGSKEKTKVEISKKETSSAPKERP. Positions 709 to 742 are disordered; that stretch reads EMPTSGSKEKTKVEISKKETSSAPKERPAPAVSS. Residues 749 to 805 form the WHEP-TRS 1 domain; the sequence is DSSVLYSRVAVQGDVVRELKAKKAPKEDIDAAVKQLLTLKAEYKEKTGQEYKPGNPS. The segment at 760-956 is 3 X 57 AA approximate repeats; sequence QGDVVRELKA…GIEYKPVSAT (197 aa). N6-acetyllysine is present on K788. The segment at 795 to 819 is disordered; that stretch reads TGQEYKPGNPSAAAVQTVSTKSSSN. The span at 808-819 shows a compositional bias: polar residues; sequence AVQTVSTKSSSN. A WHEP-TRS 2 domain is found at 822–878; sequence ESTSLYNKVAAQGEVVRKLKAEKAPKAKVTEAVECLLSLKAEYKEKTGKDYVPGQPP. N6-acetyllysine is present on K861. 2 disordered regions span residues 869–898 and 956–1011; these read GKDYVPGQPPASQNSHSNPVSNAQPAGAEK and TGAE…PKKQ. Y872 carries the post-translational modification Phosphotyrosine. Residues 878 to 892 show a composition bias toward polar residues; sequence PASQNSHSNPVSNAQ. S885 is subject to Phosphoserine. Residues 900-956 enclose the WHEP-TRS 3 domain; sequence EAKVLFDRVACQGEVVRKLKAEKASKDQVDSAVQELLQLKAQYKSLTGIEYKPVSAT. The span at 958–976 shows a compositional bias: basic and acidic residues; it reads AEDKDKKKKEKENKSEKQN. Residues 997 to 1006 are compositionally biased toward gly residues; it reads LSSGGAGEGQ. S998 carries the phosphoserine modification. At S999 the chain carries Phosphoserine; by RPS6KB1. A proline--tRNA ligase region spans residues 1007–1512; that stretch reads GPKKQTRLGL…KFYTLFGRSY (506 aa). Residues 1121–1123 and R1152 contribute to the L-proline site; that span reads TSE. ATP-binding residues include R1152, E1154, R1163, T1164, Q1237, and T1240. R1152 is subject to Omega-N-methylarginine. Residue Q1237 participates in Mg(2+) binding. Residue H1242 coordinates L-proline. The ATP site is built by T1276 and R1278. Residue S1350 is modified to Phosphoserine. Zn(2+)-binding residues include C1448, C1453, C1495, and C1497. K1503 carries the N6-acetyllysine modification.

It in the N-terminal section; belongs to the class-I aminoacyl-tRNA synthetase family. Glutamate--tRNA ligase type 2 subfamily. In the C-terminal section; belongs to the class-II aminoacyl-tRNA synthetase family. Homodimer. Part of the aminoacyl-tRNA synthetase multienzyme complex, also know as multisynthetase complex, that is composed of the tRNA ligases for Arg (RARS1), Asp (DARS1), Gln (QARS1), Ile (IARS1), Leu (LARS1), Lys (KARS1), Met (MARS1) the bifunctional ligase for Glu and Pro (EPRS1) and the auxiliary subunits AIMP1/p43, AIMP2/p38 and EEF1E1/p18. Forms a linear complex that contains MARS1, EEF1E1, EPRS1 and AIMP2 that is at the core of the multisubunit complex. Interacts with TARS3. Interacts with DUS2L. Component of the GAIT complex which is composed of EPRS1, RPL13A and GAPDH. Interacts (phosphorylated at Ser-999) with SLC27A1; mediates the translocation of SLC27A1 from the cytoplasm to the plasma membrane thereby increasing the uptake of long-chain fatty acids. Post-translationally, phosphorylated at Ser-999 by RPS6KB1; triggers EPRS1 release from the aminoacyl-tRNA synthetase multienzyme complex. In monocytes, the IFN-gamma-induced phosphorylation at Ser-999 releases EPRS1 from the aminoacyl-tRNA synthetase multienzyme complex, allowing its association with the GAIT complex. Phosphorylation at Ser-999 is specifically required for the RPL13A-mediated interaction of the GAIT complex with eIF4G. Phosphorylation at Ser-999 by RPS6KB1, is also induced by insulin through activation of the mTORC1 signaling pathway and promotes the interaction of EPRS1 with SLC27A1.

Its subcellular location is the cytoplasm. It localises to the cytosol. The protein resides in the membrane. The enzyme catalyses tRNA(Glu) + L-glutamate + ATP = L-glutamyl-tRNA(Glu) + AMP + diphosphate. It catalyses the reaction tRNA(Pro) + L-proline + ATP = L-prolyl-tRNA(Pro) + AMP + diphosphate. Its function is as follows. Multifunctional protein which primarily functions within the aminoacyl-tRNA synthetase multienzyme complex, also known as multisynthetase complex. Within the complex it catalyzes the attachment of both L-glutamate and L-proline to their cognate tRNAs in a two-step reaction where the amino acid is first activated by ATP to form a covalent intermediate with AMP. Subsequently, the activated amino acid is transferred to the acceptor end of the cognate tRNA to form L-glutamyl-tRNA(Glu) and L-prolyl-tRNA(Pro). Upon interferon-gamma stimulation, EPRS1 undergoes phosphorylation, causing its dissociation from the aminoacyl-tRNA synthetase multienzyme complex. It is recruited to form the GAIT complex, which binds to stem loop-containing GAIT elements found in the 3'-UTR of various inflammatory mRNAs, such as ceruloplasmin. The GAIT complex inhibits the translation of these mRNAs, allowing interferon-gamma to redirect the function of EPRS1 from protein synthesis to translation inhibition in specific cell contexts. Furthermore, it can function as a downstream effector in the mTORC1 signaling pathway, by promoting the translocation of SLC27A1 from the cytoplasm to the plasma membrane where it mediates the uptake of long-chain fatty acid by adipocytes. Thereby, EPRS1 also plays a role in fat metabolism and more indirectly influences lifespan. The sequence is that of Bifunctional glutamate/proline--tRNA ligase from Mus musculus (Mouse).